We begin with the raw amino-acid sequence, 328 residues long: Malate dehydrogenase (328 aa).

Residue 12-18 (GAAGQIG) participates in NAD(+) binding. Positions 95 and 101 each coordinate substrate. Residues Asn108, Gln115, and 132–134 (VGN) contribute to the NAD(+) site. The substrate site is built by Asn134 and Arg165. His190 (proton acceptor) is an active-site residue.

This sequence belongs to the LDH/MDH superfamily. MDH type 2 family.

It catalyses the reaction (S)-malate + NAD(+) = oxaloacetate + NADH + H(+). In terms of biological role, catalyzes the reversible oxidation of malate to oxaloacetate. This Paracidovorax citrulli (strain AAC00-1) (Acidovorax citrulli) protein is Malate dehydrogenase.